Here is a 307-residue protein sequence, read N- to C-terminus: Ribosomal RNA small subunit methyltransferase H (307 aa).

Residues 32–34 (GGH), Asp52, Phe78, Asp100, and Gln107 each bind S-adenosyl-L-methionine.

This sequence belongs to the methyltransferase superfamily. RsmH family.

Its subcellular location is the cytoplasm. It carries out the reaction cytidine(1402) in 16S rRNA + S-adenosyl-L-methionine = N(4)-methylcytidine(1402) in 16S rRNA + S-adenosyl-L-homocysteine + H(+). Functionally, specifically methylates the N4 position of cytidine in position 1402 (C1402) of 16S rRNA. The sequence is that of Ribosomal RNA small subunit methyltransferase H from Coxiella burnetii (strain Dugway 5J108-111).